The primary structure comprises 403 residues: F-box/kelch-repeat protein At5g39560 (403 aa).

Residues 26–72 (PPSLMSLPYEIIENILARISKWSYPNLSLVSKSFLSLLSSPQLYKTR) enclose the F-box domain. Kelch repeat units lie at residues 138 to 182 (EIYV…LIDQ), 184 to 229 (IYVL…VWPN), 248 to 294 (NPNA…IENV), and 296 to 340 (YACH…VNYG).

The sequence is that of F-box/kelch-repeat protein At5g39560 from Arabidopsis thaliana (Mouse-ear cress).